The sequence spans 169 residues: Peptide methionine sulfoxide reductase MsrA (169 aa).

C10 is an active-site residue.

Belongs to the MsrA Met sulfoxide reductase family.

It carries out the reaction L-methionyl-[protein] + [thioredoxin]-disulfide + H2O = L-methionyl-(S)-S-oxide-[protein] + [thioredoxin]-dithiol. The enzyme catalyses [thioredoxin]-disulfide + L-methionine + H2O = L-methionine (S)-S-oxide + [thioredoxin]-dithiol. In terms of biological role, has an important function as a repair enzyme for proteins that have been inactivated by oxidation. Catalyzes the reversible oxidation-reduction of methionine sulfoxide in proteins to methionine. The polypeptide is Peptide methionine sulfoxide reductase MsrA (Streptococcus agalactiae serotype III (strain NEM316)).